The chain runs to 90 residues: Large ribosomal subunit protein uL23c (90 aa).

This sequence belongs to the universal ribosomal protein uL23 family. In terms of assembly, part of the 50S ribosomal subunit.

It localises to the plastid. Its subcellular location is the chloroplast. Binds to 23S rRNA. The polypeptide is Large ribosomal subunit protein uL23c (rpl23) (Psilotum nudum (Whisk fern)).